The chain runs to 215 residues: Leucyl/phenylalanyl-tRNA--protein transferase (215 aa).

The protein belongs to the L/F-transferase family.

The protein localises to the cytoplasm. It catalyses the reaction N-terminal L-lysyl-[protein] + L-leucyl-tRNA(Leu) = N-terminal L-leucyl-L-lysyl-[protein] + tRNA(Leu) + H(+). The catalysed reaction is N-terminal L-arginyl-[protein] + L-leucyl-tRNA(Leu) = N-terminal L-leucyl-L-arginyl-[protein] + tRNA(Leu) + H(+). It carries out the reaction L-phenylalanyl-tRNA(Phe) + an N-terminal L-alpha-aminoacyl-[protein] = an N-terminal L-phenylalanyl-L-alpha-aminoacyl-[protein] + tRNA(Phe). Functionally, functions in the N-end rule pathway of protein degradation where it conjugates Leu, Phe and, less efficiently, Met from aminoacyl-tRNAs to the N-termini of proteins containing an N-terminal arginine or lysine. This is Leucyl/phenylalanyl-tRNA--protein transferase from Campylobacter jejuni subsp. jejuni serotype O:6 (strain 81116 / NCTC 11828).